The sequence spans 234 residues: Melanoregulin (234 aa).

Residues 215–234 form a disordered region; the sequence is MNQNISGGEDEDEDESEPDD. Residues 222 to 234 show a composition bias toward acidic residues; that stretch reads GEDEDEDESEPDD.

It belongs to the melanoregulin family.

It is found in the apical cell membrane. The protein resides in the melanosome membrane. It localises to the lysosome membrane. Its subcellular location is the cytoplasmic vesicle membrane. In terms of biological role, probably functions as a cargo-recognition protein that couples cytoplasmic vesicles to the transport machinery. Contributes to retrograde melanosome transport from the cell periphery to the center. Overexpression causes accumulation of late endosomes and/or lysosomes at the microtubule organising center (MTOC) at the center of the cell. Probably binds cholesterol and requires the presence of cholesterol in membranes to function in microtubule-mediated retrograde organelle transport. Binds phosphatidylinositol 3-phosphate, phosphatidylinositol 4-phosphate, phosphatidylinositol 5-phosphate and phosphatidylinositol 3,5-bisphosphate. The protein is Melanoregulin (mreg) of Danio rerio (Zebrafish).